The chain runs to 300 residues: Ribosomal RNA small subunit methyltransferase H (300 aa).

Residues 38–40 (GGH), glutamate 55, isoleucine 85, aspartate 102, and histidine 109 each bind S-adenosyl-L-methionine.

It belongs to the methyltransferase superfamily. RsmH family.

The protein resides in the cytoplasm. It carries out the reaction cytidine(1402) in 16S rRNA + S-adenosyl-L-methionine = N(4)-methylcytidine(1402) in 16S rRNA + S-adenosyl-L-homocysteine + H(+). Functionally, specifically methylates the N4 position of cytidine in position 1402 (C1402) of 16S rRNA. The polypeptide is Ribosomal RNA small subunit methyltransferase H (Brachyspira hyodysenteriae (strain ATCC 49526 / WA1)).